Reading from the N-terminus, the 334-residue chain is Cytoskeleton protein RodZ (334 aa).

Over 1 to 111 (MNTEATHDQN…LGKRRKKRDG (111 aa)) the chain is Cytoplasmic. The 53-residue stretch at 19–71 (LRNAREQLGLSQQAVAERLCLKVSTVRDIEEDKAPSDLASTFLRGYIRSYARL) folds into the HTH cro/C1-type domain. Positions 30-49 (QQAVAERLCLKVSTVRDIEE) form a DNA-binding region, H-T-H motif. A helical; Signal-anchor for type II membrane protein membrane pass occupies residues 112 to 132 (WLMSFTWLVLFVVVGLTGAWW). Residues 133-334 (WQNHKAQQEE…TLNAEPTPAQ (202 aa)) lie on the Periplasmic side of the membrane. Positions 155–241 (NADKDSGQSV…PSALPTSQAG (87 aa)) are disordered. The segment covering 161–175 (GQSVPLDTGAVTSQD) has biased composition (polar residues). 2 stretches are compositionally biased toward low complexity: residues 176–211 (TTPA…TVVA) and 219–241 (TAAT…SQAG).

This sequence belongs to the RodZ family.

It is found in the cell inner membrane. Cytoskeletal protein that is involved in cell-shape control through regulation of the length of the long axis. This is Cytoskeleton protein RodZ from Salmonella dublin (strain CT_02021853).